The chain runs to 173 residues: RNA pyrophosphohydrolase (173 aa).

Residues 6–149 (GFRANVGIII…KRDVYRKVMK (144 aa)) enclose the Nudix hydrolase domain. The Nudix box signature appears at 38-59 (GGVDEGESAEEAMYRELYEEVG).

The protein belongs to the Nudix hydrolase family. RppH subfamily. A divalent metal cation is required as a cofactor.

Its function is as follows. Accelerates the degradation of transcripts by removing pyrophosphate from the 5'-end of triphosphorylated RNA, leading to a more labile monophosphorylated state that can stimulate subsequent ribonuclease cleavage. This Shewanella piezotolerans (strain WP3 / JCM 13877) protein is RNA pyrophosphohydrolase.